Here is a 434-residue protein sequence, read N- to C-terminus: Putative neutral sphingomyelinase (434 aa).

Residue glutamate 83 participates in Mg(2+) binding. The active-site Proton acceptor is histidine 318. 2 helical membrane-spanning segments follow: residues 366–388 and 392–414; these read IFFFILAVICLILILGSLFFEVF and FAVLRFALTVVGVFFVWQGLIGL.

It belongs to the neutral sphingomyelinase family.

The protein resides in the membrane. It carries out the reaction an N-(acyl)-sphingosylphosphocholine + H2O = an N-acyl-sphingoid base + phosphocholine + H(+). It catalyses the reaction a sphingomyelin + H2O = phosphocholine + an N-acylsphing-4-enine + H(+). The catalysed reaction is an N-acyl-15-methylhexadecasphing-4-enine-1-phosphocholine + H2O = an N-acyl-15-methylhexadecasphing-4-enine + phosphocholine + H(+). It participates in lipid metabolism; sphingolipid metabolism. Its function is as follows. Catalyzes the hydrolysis of sphingomyelin producing a ceramide (N-acyl-sphingoid base) and a phosphocholine. C.elegans contain specific sphingoid bases, which are unique or different in structure compared to the sphingoid bases found in other animals. Two examples of these distinctive compounds are: 15-methylhexadecasphinganine and 15-methylhexadecasphing-4-enine. The sequence is that of Putative neutral sphingomyelinase from Caenorhabditis elegans.